A 235-amino-acid chain; its full sequence is MIELEVVIRTVASFGLLLIAERILGKQTISQMTIFDFIAAITLGAIAAGLAYNTSIKPHNMAISFSIFVLTIFLISFLSIKNRKLRKFFAGDPTVLIQNGKILESNMRKMRYTLDYLNQQLREKEIFNIEEVLFAILETNGQLTVLRKPQFRHVTKQDLMIAVNQEQRLPIELIMDGEIIENNLKQNRLTESWLLEELRKRDIKVKETVYAVLLGNGDIYVDQYKDHISVPMDKE.

Transmembrane regions (helical) follow at residues 32–52 and 60–80; these read MTIF…GLAY and NMAI…FLSI.

Belongs to the UPF0702 family.

It is found in the cell membrane. The sequence is that of UPF0702 transmembrane protein YdfS (ydfS) from Bacillus subtilis (strain 168).